The chain runs to 107 residues: Phosphoribosyl-ATP pyrophosphatase (107 aa).

This sequence belongs to the PRA-PH family.

It is found in the cytoplasm. The enzyme catalyses 1-(5-phospho-beta-D-ribosyl)-ATP + H2O = 1-(5-phospho-beta-D-ribosyl)-5'-AMP + diphosphate + H(+). Its pathway is amino-acid biosynthesis; L-histidine biosynthesis; L-histidine from 5-phospho-alpha-D-ribose 1-diphosphate: step 2/9. The polypeptide is Phosphoribosyl-ATP pyrophosphatase (Brucella abortus (strain S19)).